The primary structure comprises 208 residues: Recombination protein RecR (208 aa).

The C4-type zinc finger occupies 57–72 (CALCNTLTEQEVCVTC). Positions 80–187 (SKLCVVETPA…QVTRLARGVP (108 aa)) constitute a Toprim domain.

Belongs to the RecR family.

In terms of biological role, may play a role in DNA repair. It seems to be involved in an RecBC-independent recombinational process of DNA repair. It may act with RecF and RecO. This chain is Recombination protein RecR, found in Polaromonas naphthalenivorans (strain CJ2).